We begin with the raw amino-acid sequence, 503 residues long: Cobyric acid synthase (503 aa).

The 203-residue stretch at 245–447 (DISIAIIRLP…LHGIFDEISL (203 aa)) folds into the GATase cobBQ-type domain. The Nucleophile role is filled by Cys326. His439 is a catalytic residue.

The protein belongs to the CobB/CobQ family. CobQ subfamily.

The protein operates within cofactor biosynthesis; adenosylcobalamin biosynthesis. Its function is as follows. Catalyzes amidations at positions B, D, E, and G on adenosylcobyrinic A,C-diamide. NH(2) groups are provided by glutamine, and one molecule of ATP is hydrogenolyzed for each amidation. This Alkaliphilus metalliredigens (strain QYMF) protein is Cobyric acid synthase.